The chain runs to 905 residues: DNA mismatch repair protein MutS (905 aa).

The disordered stretch occupies residues 389-410 (ERPANPEGTYPTDAETSGDTLP). 638 to 645 (GPNMAGKS) is an ATP binding site. The tract at residues 826–847 (RDAARGTNSAPSRQTLPGLDLP) is disordered. Over residues 831-840 (GTNSAPSRQT) the composition is skewed to polar residues.

Belongs to the DNA mismatch repair MutS family.

In terms of biological role, this protein is involved in the repair of mismatches in DNA. It is possible that it carries out the mismatch recognition step. This protein has a weak ATPase activity. This Nitratidesulfovibrio vulgaris (strain ATCC 29579 / DSM 644 / CCUG 34227 / NCIMB 8303 / VKM B-1760 / Hildenborough) (Desulfovibrio vulgaris) protein is DNA mismatch repair protein MutS.